Reading from the N-terminus, the 207-residue chain is Small ribosomal subunit protein uS10m (207 aa).

The N-terminal 24 residues, 1-24, are a transit peptide targeting the mitochondrion; sequence MLSVFGLRTVARCNSTLASGGARA.

This sequence belongs to the universal ribosomal protein uS10 family. In terms of assembly, part of the mitochondrial small ribosomal subunit.

The protein resides in the mitochondrion. Functionally, involved in mitochondrial genome encoded proteins translation. Involved in the binding of tRNA to the ribosomes. This Eremothecium gossypii (strain ATCC 10895 / CBS 109.51 / FGSC 9923 / NRRL Y-1056) (Yeast) protein is Small ribosomal subunit protein uS10m (RSM10).